The following is a 463-amino-acid chain: NEDD8-activating enzyme E1 catalytic subunit (463 aa).

A2 carries the N-acetylalanine modification. Residues 53–70 (HPDFEPSTESLQFLLDTC) form an interaction with UBE2M N-terminus region. ATP contacts are provided by residues 100–124 (DMDT…GRPK) and 148–171 (IQDF…SIIA). 2 interaction with UBE2M N-terminus regions span residues 157–161 (RQFHI) and 192–217 (PSSI…LPGM). An interaction with NEDD8 region spans residues 227–229 (LYP). C237 serves as the catalytic Glycyl thioester intermediate. 2 interaction with NAE1 regions span residues 242-248 (MPRLPEH) and 292-295 (YNIR). The tract at residues 331–338 (IATSAYIP) is interaction with UBE2M N-terminus. Residues 352-357 (YTYTFE) are interaction with NEDD8. Residues 368–463 (SQLPQNIQFS…TVLFKLHFTS (96 aa)) form an interaction with UBE2M core domain region.

This sequence belongs to the ubiquitin-activating E1 family. UBA3 subfamily. In terms of assembly, heterodimer of UBA3 and NAE1. Interacts with NEDD8, UBE2F and UBE2M. Binds ESR1 and ESR2 with bound steroid ligand. Interacts with TBATA. In terms of tissue distribution, ubiquitously expressed.

It catalyses the reaction ATP + [NEDD8 protein] + [E1 NEDD8-activating enzyme]-L-cysteine = AMP + diphosphate + [E1 NEDD8-activating enzyme]-S-[NEDD8 protein]-yl-L-cysteine.. The protein operates within protein modification; protein neddylation. Binding of TP53BP2 to the regulatory subunit NAE1 decreases activity. Its function is as follows. Catalytic subunit of the dimeric UBA3-NAE1 E1 enzyme. E1 activates NEDD8 by first adenylating its C-terminal glycine residue with ATP, thereafter linking this residue to the side chain of the catalytic cysteine, yielding a NEDD8-UBA3 thioester and free AMP. E1 finally transfers NEDD8 to the catalytic cysteine of UBE2M. Down-regulates steroid receptor activity. Necessary for cell cycle progression. The sequence is that of NEDD8-activating enzyme E1 catalytic subunit (UBA3) from Homo sapiens (Human).